The sequence spans 436 residues: Alpha-galactosidase mel1 (436 aa).

An N-terminal signal peptide occupies residues 1–24 (MISISFLNCFFLVFLFLFFSDVHG). Cys45 and Cys77 are joined by a disulfide. Residue Asn84 is glycosylated (N-linked (GlcNAc...) asparagine). Cysteines 126 and 156 form a disulfide. Residue Asp154 is the Nucleophile of the active site. Asn180 carries N-linked (GlcNAc...) asparagine glycosylation. Residue Asp214 is the Proton donor of the active site.

This sequence belongs to the glycosyl hydrolase 27 family.

The protein localises to the endoplasmic reticulum lumen. The protein resides in the secreted. The enzyme catalyses Hydrolysis of terminal, non-reducing alpha-D-galactose residues in alpha-D-galactosides, including galactose oligosaccharides, galactomannans and galactolipids.. Functionally, secreted alpha-galactosidase required for catabolic conversion of melibiose to glucose and galactose. The sequence is that of Alpha-galactosidase mel1 (mel1) from Schizosaccharomyces pombe (strain 972 / ATCC 24843) (Fission yeast).